The primary structure comprises 456 residues: Argininosuccinate lyase (456 aa).

It belongs to the lyase 1 family. Argininosuccinate lyase subfamily.

The protein localises to the cytoplasm. The catalysed reaction is 2-(N(omega)-L-arginino)succinate = fumarate + L-arginine. It participates in amino-acid biosynthesis; L-arginine biosynthesis; L-arginine from L-ornithine and carbamoyl phosphate: step 3/3. This is Argininosuccinate lyase from Shewanella amazonensis (strain ATCC BAA-1098 / SB2B).